The primary structure comprises 85 residues: Small ribosomal subunit protein bS16 (85 aa).

It belongs to the bacterial ribosomal protein bS16 family.

The protein is Small ribosomal subunit protein bS16 of Xanthomonas oryzae pv. oryzae (strain PXO99A).